Reading from the N-terminus, the 242-residue chain is Tyrosine recombinase XerD-like (242 aa).

One can recognise a Core-binding (CB) domain in the interval 1–71 (MKEAIDQFIQ…AVNQFLYFLY (71 aa)). In terms of domain architecture, Tyr recombinase spans 90–242 (ENSSQGSLLD…KSITTLEKYR (153 aa)). Residues K148 and R209 contribute to the active site. Y241 (O-(3'-phospho-DNA)-tyrosine intermediate) is an active-site residue.

It belongs to the 'phage' integrase family. XerD-like subfamily.

It localises to the cytoplasm. In terms of biological role, putative tyrosine recombinase. Not involved in the cutting and rejoining of the recombining DNA molecules on dif(SL) site. The chain is Tyrosine recombinase XerD-like from Streptococcus gordonii (strain Challis / ATCC 35105 / BCRC 15272 / CH1 / DL1 / V288).